We begin with the raw amino-acid sequence, 490 residues long: Auxin transporter-like protein 5 (490 aa).

Residues 1–55 are Cytoplasmic-facing; it reads MEMANDKVAETVIVGNYVEMESEGKPPQDIKSKLSNFLWHGGSAYDAWFSCASNQ. Residues 56–73 form a helical membrane-spanning segment; it reads VAQVLLTLPYSFSQLGML. Residues 74–75 are Extracellular-facing; sequence SG. Residues 76–96 form a helical membrane-spanning segment; it reads ILFQLFYGILGSWTAYLISIL. At 97–132 the chain is on the cytoplasmic side; the sequence is YVEYRTRKEREKVNFRSHVIQWFEVLDGLLGKHWRN. Residues 133 to 153 form a helical membrane-spanning segment; the sequence is VGLGFNCTFLLFGSVIQLIAC. Topologically, residues 154–168 are extracellular; it reads ASNIYYINDNLDKRT. A helical membrane pass occupies residues 169–189; sequence WTYIFGACCATTVFIPSFHNY. Arg190 is a topological domain (cytoplasmic). The helical transmembrane segment at 191-211 threads the bilayer; the sequence is IWSFLGLVMTTYTAWYLTIAA. Topologically, residues 212 to 227 are extracellular; sequence VLHGQVEGVKHSGPNK. A helical membrane pass occupies residues 228–248; it reads IILYFTGATNILYTFGGHAVT. Topologically, residues 249-262 are cytoplasmic; sequence VEIMHAMWKPQKFK. A helical membrane pass occupies residues 263–283; the sequence is AIYLLATLYVLTLTIPSATAV. Over 284–310 the chain is Extracellular; the sequence is YWAFGDMLLNHSNAFALLPKSPFRDMA. N-linked (GlcNAc...) asparagine glycosylation is present at Asn293. A helical transmembrane segment spans residues 311 to 331; the sequence is VILMLIHQFITFGFACTPLYF. Residues 332–352 lie on the Cytoplasmic side of the membrane; sequence VWEKTVGMHECKSLCKRALVR. Residues 353–373 form a helical membrane-spanning segment; it reads LPVVIPIWFLAIIFPFFGPIN. The Extracellular portion of the chain corresponds to 374–376; the sequence is STV. Residues 377 to 397 form a helical membrane-spanning segment; that stretch reads GSLLVSFTVYIIPALAHIFTF. Residues 398 to 420 lie on the Cytoplasmic side of the membrane; it reads KSSSARQNAVEQPPKFVGRWVGT. The chain crosses the membrane as a helical span at residues 421 to 441; the sequence is FVINVFIVVWVLIVGFGFGGW. Residues 442-490 are Extracellular-facing; that stretch reads ASMVNFVHQIDTFGLFTKCYQCPPPTPSVPTMPPHQMNATAPSPHHHHH. A glycan (N-linked (GlcNAc...) asparagine) is linked at Asn479.

It belongs to the amino acid/polyamine transporter 2 family. Amino acid/auxin permease (AAAP) (TC 2.A.18.1) subfamily. As to expression, shoots and roots of nodulating plants, at low levels.

The protein resides in the cell membrane. Carrier protein involved in proton-driven auxin influx. Mediates the formation of auxin gradient from developing leaves (site of auxin biosynthesis) to tips by contributing to the loading of auxin in vascular tissues and facilitating acropetal (base to tip) auxin transport within inner tissues of the root apex, and basipetal (tip to base) auxin transport within outer tissues of the root apex. May be involved in lateral roots and nodules formation. The polypeptide is Auxin transporter-like protein 5 (LAX5) (Medicago truncatula (Barrel medic)).